The primary structure comprises 78 residues: Small ribosomal subunit protein bS20 (78 aa).

Belongs to the bacterial ribosomal protein bS20 family.

Its function is as follows. Binds directly to 16S ribosomal RNA. This Streptococcus thermophilus (strain ATCC BAA-491 / LMD-9) protein is Small ribosomal subunit protein bS20.